The sequence spans 447 residues: MTVDEQVSNYYDMLLKRNAGEPEFHQAVAEVLESLKIVLEKDPHYADYGLIQRLCEPERQLIFRVPWVDDNGQVHVNRGFRVQFNSALGPYKGGLRFHPSVNLGIVKFLGFEQIFKNSLTGLPIGGGKGGSDFDPKGKSELEIMRFCQSFMTELHRHIGEYRDVPAGDIGVGGREIGYLFGHYRRLANQHESGVLTGKGLTWGGSLVRTEATGFGTVYFVQEMIKAEGETLEGKKVIVSGSGNVATYAIQKVQELGAVVVGFSDSSGWVSTPNGVDVAKLREIKEVRRARVSSYADEVEGAEYHTDGSIWDLTADIALPCATQNELDGDNARTLADNGCRFVAEGANMPSTPEAIDVFRERGVLFGPGKAANAGGVATSALEMQQNASRDSWSFEYTDERLHRIMKNIFKSCADTAKEYGHEKNYVVGANIAGFKKVADAMLAQGVI.

Substrate-binding residues include K92, Q113, and K116. K128 serves as the catalytic Proton donor. Substrate is bound at residue G167. The NADP(+) site is built by T212 and N243. S379 is a binding site for substrate.

The protein belongs to the Glu/Leu/Phe/Val dehydrogenases family. In terms of assembly, homohexamer.

It carries out the reaction L-glutamate + NADP(+) + H2O = 2-oxoglutarate + NH4(+) + NADPH + H(+). Its function is as follows. Catalyzes the reversible oxidative deamination of glutamate to alpha-ketoglutarate and ammonia. This chain is NADP-specific glutamate dehydrogenase (gdh), found in Corynebacterium efficiens (strain DSM 44549 / YS-314 / AJ 12310 / JCM 11189 / NBRC 100395).